The following is a 289-amino-acid chain: ATP synthase subunit a (289 aa).

6 helical membrane-spanning segments follow: residues 43–63 (AFHLDTLGWSVALGLIFLFIF), 103–123 (VIAPLALTIFVWVFLMNAVDL), 160–180 (FCVFALIIFYSIKVKGLGGFI), 193–213 (IFVQILLIPVNFLLEFVTLIA), 232–252 (VFILIAVMFGSGLLWLSGLGV), and 259–279 (AVFHILIITLQAFIFMMLTIV).

It belongs to the ATPase A chain family. As to quaternary structure, F-type ATPases have 2 components, CF(1) - the catalytic core - and CF(0) - the membrane proton channel. CF(1) has five subunits: alpha(3), beta(3), gamma(1), delta(1), epsilon(1). CF(0) has three main subunits: a(1), b(2) and c(9-12). The alpha and beta chains form an alternating ring which encloses part of the gamma chain. CF(1) is attached to CF(0) by a central stalk formed by the gamma and epsilon chains, while a peripheral stalk is formed by the delta and b chains.

Its subcellular location is the cell inner membrane. Key component of the proton channel; it plays a direct role in the translocation of protons across the membrane. This is ATP synthase subunit a from Pseudomonas putida (strain GB-1).